Consider the following 439-residue polypeptide: Trigger factor (439 aa).

Residues 170-255 (GDTVVIDFDG…IHELKKLETP (86 aa)) enclose the PPIase FKBP-type domain.

Belongs to the FKBP-type PPIase family. Tig subfamily.

The protein resides in the cytoplasm. It carries out the reaction [protein]-peptidylproline (omega=180) = [protein]-peptidylproline (omega=0). Functionally, involved in protein export. Acts as a chaperone by maintaining the newly synthesized protein in an open conformation. Functions as a peptidyl-prolyl cis-trans isomerase. The sequence is that of Trigger factor from Oenococcus oeni (strain ATCC BAA-331 / PSU-1).